A 340-amino-acid polypeptide reads, in one-letter code: UDP-3-O-acylglucosamine N-acyltransferase (340 aa).

His240 (proton acceptor) is an active-site residue.

Belongs to the transferase hexapeptide repeat family. LpxD subfamily. Homotrimer.

The catalysed reaction is a UDP-3-O-[(3R)-3-hydroxyacyl]-alpha-D-glucosamine + a (3R)-hydroxyacyl-[ACP] = a UDP-2-N,3-O-bis[(3R)-3-hydroxyacyl]-alpha-D-glucosamine + holo-[ACP] + H(+). Its pathway is bacterial outer membrane biogenesis; LPS lipid A biosynthesis. Functionally, catalyzes the N-acylation of UDP-3-O-acylglucosamine using 3-hydroxyacyl-ACP as the acyl donor. Is involved in the biosynthesis of lipid A, a phosphorylated glycolipid that anchors the lipopolysaccharide to the outer membrane of the cell. This Pseudoalteromonas translucida (strain TAC 125) protein is UDP-3-O-acylglucosamine N-acyltransferase.